We begin with the raw amino-acid sequence, 154 residues long: Large ribosomal subunit protein uL24 (154 aa).

The disordered stretch occupies residues 97 to 154 (EIAARKNLPPPEVPEETSNDTKESDENVTGADKEETNEIKEEDLNDNEDKNNDGSQEA). The segment covering 115-135 (NDTKESDENVTGADKEETNEI) has biased composition (basic and acidic residues).

The protein belongs to the universal ribosomal protein uL24 family. Part of the 50S ribosomal subunit.

In terms of biological role, one of two assembly initiator proteins, it binds directly to the 5'-end of the 23S rRNA, where it nucleates assembly of the 50S subunit. Located at the polypeptide exit tunnel on the outside of the subunit. This chain is Large ribosomal subunit protein uL24, found in Picrophilus torridus (strain ATCC 700027 / DSM 9790 / JCM 10055 / NBRC 100828 / KAW 2/3).